The following is a 308-amino-acid chain: Insoluble matrix shell protein 4 (308 aa).

Disordered stretches follow at residues 1–21 (HGNG…GNGY), 47–104 (NTNS…PNAV), and 134–250 (YDSN…NTNS). Over residues 47 to 99 (NTNSLNGNNNGNSNNNGNGNNNGNSNNNGNGNNNGNTNNGNSYDSNTNDDSNS) the composition is skewed to low complexity.

As to expression, component of the acid-insoluble organic matrix of the calcified shell.

It is found in the secreted. This chain is Insoluble matrix shell protein 4, found in Ruditapes philippinarum (Japanese carpet shell).